Reading from the N-terminus, the 321-residue chain is 4-hydroxy-3-methylbut-2-enyl diphosphate reductase (321 aa).

Cysteine 12 is a binding site for [4Fe-4S] cluster. 2 residues coordinate (2E)-4-hydroxy-3-methylbut-2-enyl diphosphate: histidine 41 and histidine 74. 2 residues coordinate dimethylallyl diphosphate: histidine 41 and histidine 74. Isopentenyl diphosphate is bound by residues histidine 41 and histidine 74. Residue cysteine 96 coordinates [4Fe-4S] cluster. Histidine 124 is a (2E)-4-hydroxy-3-methylbut-2-enyl diphosphate binding site. Dimethylallyl diphosphate is bound at residue histidine 124. Histidine 124 contributes to the isopentenyl diphosphate binding site. Glutamate 126 functions as the Proton donor in the catalytic mechanism. Threonine 167 is a (2E)-4-hydroxy-3-methylbut-2-enyl diphosphate binding site. Cysteine 197 is a [4Fe-4S] cluster binding site. The (2E)-4-hydroxy-3-methylbut-2-enyl diphosphate site is built by serine 225, serine 226, asparagine 227, and serine 269. Dimethylallyl diphosphate is bound by residues serine 225, serine 226, asparagine 227, and serine 269. Serine 225, serine 226, asparagine 227, and serine 269 together coordinate isopentenyl diphosphate.

Belongs to the IspH family. As to quaternary structure, homodimer. Requires [4Fe-4S] cluster as cofactor.

It catalyses the reaction isopentenyl diphosphate + 2 oxidized [2Fe-2S]-[ferredoxin] + H2O = (2E)-4-hydroxy-3-methylbut-2-enyl diphosphate + 2 reduced [2Fe-2S]-[ferredoxin] + 2 H(+). It carries out the reaction dimethylallyl diphosphate + 2 oxidized [2Fe-2S]-[ferredoxin] + H2O = (2E)-4-hydroxy-3-methylbut-2-enyl diphosphate + 2 reduced [2Fe-2S]-[ferredoxin] + 2 H(+). It participates in isoprenoid biosynthesis; dimethylallyl diphosphate biosynthesis; dimethylallyl diphosphate from (2E)-4-hydroxy-3-methylbutenyl diphosphate: step 1/1. The protein operates within isoprenoid biosynthesis; isopentenyl diphosphate biosynthesis via DXP pathway; isopentenyl diphosphate from 1-deoxy-D-xylulose 5-phosphate: step 6/6. Functionally, catalyzes the conversion of 1-hydroxy-2-methyl-2-(E)-butenyl 4-diphosphate (HMBPP) into a mixture of isopentenyl diphosphate (IPP) and dimethylallyl diphosphate (DMAPP). Acts in the terminal step of the DOXP/MEP pathway for isoprenoid precursor biosynthesis. In Escherichia coli O6:K15:H31 (strain 536 / UPEC), this protein is 4-hydroxy-3-methylbut-2-enyl diphosphate reductase.